Reading from the N-terminus, the 209-residue chain is Uracil phosphoribosyltransferase (209 aa).

5-phospho-alpha-D-ribose 1-diphosphate is bound by residues R79, R104, and 131 to 139 (DPMLATGGS). Residues I194 and 199–201 (GDA) contribute to the uracil site. D200 contacts 5-phospho-alpha-D-ribose 1-diphosphate.

It belongs to the UPRTase family. Mg(2+) is required as a cofactor.

The enzyme catalyses UMP + diphosphate = 5-phospho-alpha-D-ribose 1-diphosphate + uracil. Its pathway is pyrimidine metabolism; UMP biosynthesis via salvage pathway; UMP from uracil: step 1/1. With respect to regulation, allosterically activated by GTP. Its function is as follows. Catalyzes the conversion of uracil and 5-phospho-alpha-D-ribose 1-diphosphate (PRPP) to UMP and diphosphate. This Alkaliphilus metalliredigens (strain QYMF) protein is Uracil phosphoribosyltransferase.